The following is a 341-amino-acid chain: tRNA N6-adenosine threonylcarbamoyltransferase (341 aa).

2 residues coordinate Fe cation: histidine 111 and histidine 115. Residues 134–138, aspartate 167, glycine 180, and asparagine 272 contribute to the substrate site; that span reads LVSGG. Aspartate 300 provides a ligand contact to Fe cation.

It belongs to the KAE1 / TsaD family. Fe(2+) serves as cofactor.

The protein resides in the cytoplasm. The enzyme catalyses L-threonylcarbamoyladenylate + adenosine(37) in tRNA = N(6)-L-threonylcarbamoyladenosine(37) in tRNA + AMP + H(+). In terms of biological role, required for the formation of a threonylcarbamoyl group on adenosine at position 37 (t(6)A37) in tRNAs that read codons beginning with adenine. Is involved in the transfer of the threonylcarbamoyl moiety of threonylcarbamoyl-AMP (TC-AMP) to the N6 group of A37, together with TsaE and TsaB. TsaD likely plays a direct catalytic role in this reaction. This Blochmanniella pennsylvanica (strain BPEN) protein is tRNA N6-adenosine threonylcarbamoyltransferase.